Reading from the N-terminus, the 642-residue chain is Zinc finger protein 14 (642 aa).

Residues 4 to 76 (VSFEDVAVNF…MVERLCESRR (73 aa)) form the KRAB domain. A C2H2-type 1 zinc finger spans residues 103 to 125 (HECSFCGRDFIHHSSLNRHMRSH). The C2H2-type 2; degenerate zinc-finger motif lies at 141–163 (CKCKAVGKTFSYHHCFRKHERTH). The C2H2-type 3 zinc-finger motif lies at 169 to 191 (YECKQCGKAFIYYQPFQRHERTH). The segment at 197 to 217 (YECKQCGKTFIYYQSFQKHAH) adopts a C2H2-type 4; atypical zinc-finger fold. 15 consecutive C2H2-type zinc fingers follow at residues 223–245 (YECK…KRTH), 251–273 (YECK…ERTH), 279–301 (YKCK…KRTH), 307–329 (YECK…VIIH), 335–357 (YKCK…ERTH), 363–385 (YECK…ERTH), 391–413 (YECK…ETTH), 419–441 (YECK…ERTH), 447–469 (YECK…ERSH), 475–497 (YECK…ERTH), 503–525 (YECK…EKIH), 531–553 (FECK…ERTH), 559–581 (YQCK…ERTH), 587–609 (YRCK…ERSH), and 615–637 (YECK…ERTH).

The protein belongs to the krueppel C2H2-type zinc-finger protein family.

Its subcellular location is the nucleus. May be involved in transcriptional regulation. The polypeptide is Zinc finger protein 14 (ZNF14) (Homo sapiens (Human)).